The sequence spans 306 residues: Ribosomal RNA small subunit methyltransferase H (306 aa).

S-adenosyl-L-methionine contacts are provided by residues Gly33–Tyr35, Asp51, Phe78, Asp96, and Gln103.

This sequence belongs to the methyltransferase superfamily. RsmH family.

The protein resides in the cytoplasm. It carries out the reaction cytidine(1402) in 16S rRNA + S-adenosyl-L-methionine = N(4)-methylcytidine(1402) in 16S rRNA + S-adenosyl-L-homocysteine + H(+). Functionally, specifically methylates the N4 position of cytidine in position 1402 (C1402) of 16S rRNA. This Rickettsia felis (strain ATCC VR-1525 / URRWXCal2) (Rickettsia azadi) protein is Ribosomal RNA small subunit methyltransferase H.